A 306-amino-acid chain; its full sequence is MIAQVIDGRAEAARLTDNVRARAHRFTDEFGRCPGLAVVLIGDDPASSVYVKAKTEKARSTGILSSSHRLPSDTTEDALLRLIDQLNRDRTVDGILVQLPLPPHIAPERVLQRILPCKDVDGFHPVNAGLLATGQPGLVPCTPLGCLRLVQSVAAELVGQNVVVVGRSTIVGRPAAQVFLNADCSVTILHKESRDVPGHCRSADILVVAAGSPGLVRRDWVKPGAVVIDVGINRIPVSSGYRLVGDVDFEGVQYVASAITPVPGGVGPMTVAALMENTVACAEALAIRAPEVMSPDNRLHFDHADV.

Residues 166 to 168 and isoleucine 232 contribute to the NADP(+) site; that span reads GRS.

It belongs to the tetrahydrofolate dehydrogenase/cyclohydrolase family. Homodimer.

It carries out the reaction (6R)-5,10-methylene-5,6,7,8-tetrahydrofolate + NADP(+) = (6R)-5,10-methenyltetrahydrofolate + NADPH. The enzyme catalyses (6R)-5,10-methenyltetrahydrofolate + H2O = (6R)-10-formyltetrahydrofolate + H(+). The protein operates within one-carbon metabolism; tetrahydrofolate interconversion. Catalyzes the oxidation of 5,10-methylenetetrahydrofolate to 5,10-methenyltetrahydrofolate and then the hydrolysis of 5,10-methenyltetrahydrofolate to 10-formyltetrahydrofolate. The sequence is that of Bifunctional protein FolD from Methylorubrum extorquens (strain CM4 / NCIMB 13688) (Methylobacterium extorquens).